A 660-amino-acid polypeptide reads, in one-letter code: Acetyl-coenzyme A synthetase (660 aa).

CoA-binding positions include 197–200 and Thr317; that span reads RGGK. ATP is bound by residues 397–399, 421–426, Asp512, and Arg528; these read GEP and DTFWQT. Residue Ser536 coordinates CoA. Arg539 contacts ATP. Val550 and Val555 together coordinate Mg(2+). At Lys625 the chain carries N6-acetyllysine.

Belongs to the ATP-dependent AMP-binding enzyme family. The cofactor is Mg(2+). Acetylated. Deacetylation by the SIR2-homolog deacetylase activates the enzyme.

It carries out the reaction acetate + ATP + CoA = acetyl-CoA + AMP + diphosphate. In terms of biological role, catalyzes the conversion of acetate into acetyl-CoA (AcCoA), an essential intermediate at the junction of anabolic and catabolic pathways. AcsA undergoes a two-step reaction. In the first half reaction, AcsA combines acetate with ATP to form acetyl-adenylate (AcAMP) intermediate. In the second half reaction, it can then transfer the acetyl group from AcAMP to the sulfhydryl group of CoA, forming the product AcCoA. The chain is Acetyl-coenzyme A synthetase from Ralstonia nicotianae (strain ATCC BAA-1114 / GMI1000) (Ralstonia solanacearum).